The chain runs to 447 residues: Drebrin-like protein A (447 aa).

An ADF-H domain is found at 2-133; sequence SVNLSKNGAA…EPESIMEKVA (132 aa). 2 disordered regions span residues 141–160 and 184–368; these read NFHK…VGSV and KDEE…TENQ. Residues 180-245 adopt a coiled-coil conformation; it reads AKAEKDEEER…EQEETEKQQT (66 aa). The segment covering 184-242 has biased composition (basic and acidic residues); the sequence is KDEEERRMEENRRANSEKDRLERERKEREQREAETREQRFRERAKEIDAQRKEQEETEK. Over residues 246–255 the composition is skewed to polar residues; it reads VPASQRSVNP. Pro residues predominate over residues 319-328; it reads PESPVPPVSH. The segment covering 345 to 365 has biased composition (acidic residues); it reads QEEENIYQDATEDQNIYEDTT. Residues 388-447 enclose the SH3 domain; it reads EKGVCARALYDYQAADDTEISFDPDDLITQIQFIDEGWWRGFSPAGHFGMFPANYVELLE.

It belongs to the ABP1 family.

It is found in the cytoplasm. It localises to the cytoskeleton. The protein localises to the cell projection. The protein resides in the lamellipodium. Its subcellular location is the ruffle. It is found in the cell cortex. It localises to the cytosol. The protein localises to the synapse. The protein resides in the perikaryon. Its subcellular location is the neuron projection. It is found in the cell membrane. It localises to the cytoplasmic vesicle. The protein localises to the clathrin-coated vesicle membrane. The protein resides in the golgi apparatus membrane. Its subcellular location is the podosome. It is found in the early endosome. It localises to the dendrite. The protein localises to the postsynaptic density. Its function is as follows. Adapter protein that binds F-actin and dynamin, and thereby plays a role in receptor-mediated endocytosis. Plays a role in the reorganization of the actin cytoskeleton, formation of cell projections, such as neurites, in neuron morphogenesis and synapse formation. Does not bind G-actin and promote actin polymerization by itself, but excerts its functions by interaction with other proteins. Required for the formation of organized podosome rosettes. This Xenopus laevis (African clawed frog) protein is Drebrin-like protein A (dbnl-a).